A 292-amino-acid polypeptide reads, in one-letter code: Pantothenate synthetase (292 aa).

32 to 39 provides a ligand contact to ATP; it reads MGFLHEGH. H39 serves as the catalytic Proton donor. Q63 is a (R)-pantoate binding site. Q63 contributes to the beta-alanine binding site. 150-153 provides a ligand contact to ATP; the sequence is GEKD. Q156 contributes to the (R)-pantoate binding site. ATP contacts are provided by residues V179 and 187–190; that span reads MSSR.

Belongs to the pantothenate synthetase family. In terms of assembly, homodimer.

Its subcellular location is the cytoplasm. The catalysed reaction is (R)-pantoate + beta-alanine + ATP = (R)-pantothenate + AMP + diphosphate + H(+). It participates in cofactor biosynthesis; (R)-pantothenate biosynthesis; (R)-pantothenate from (R)-pantoate and beta-alanine: step 1/1. In terms of biological role, catalyzes the condensation of pantoate with beta-alanine in an ATP-dependent reaction via a pantoyl-adenylate intermediate. The protein is Pantothenate synthetase of Myxococcus xanthus (strain DK1622).